Reading from the N-terminus, the 59-residue chain is UPF0434 protein Rsph17029_0141 (59 aa).

This sequence belongs to the UPF0434 family.

The chain is UPF0434 protein Rsph17029_0141 from Cereibacter sphaeroides (strain ATCC 17029 / ATH 2.4.9) (Rhodobacter sphaeroides).